Here is a 400-residue protein sequence, read N- to C-terminus: Aspartate aminotransferase (400 aa).

L-aspartate is bound by residues G37, W126, and N176. At K238 the chain carries N6-(pyridoxal phosphate)lysine. R367 is a binding site for L-aspartate.

Belongs to the class-I pyridoxal-phosphate-dependent aminotransferase family. In terms of assembly, homodimer. Requires pyridoxal 5'-phosphate as cofactor.

The protein localises to the cytoplasm. It carries out the reaction L-aspartate + 2-oxoglutarate = oxaloacetate + L-glutamate. In terms of biological role, catalyzes the reversible conversion of aspartate and 2-oxoglutarate to glutamate and oxaloacetate. Has very weak prephenate aminotransferase activity. This Musicola paradisiaca (strain Ech703) (Dickeya paradisiaca) protein is Aspartate aminotransferase.